A 97-amino-acid chain; its full sequence is MQVLVRDNNVDQALRVLKKKMQREGIFREMKQRKAYEKPSVRKAREKAEAVRRARKQARKTAIREGLIAAPKPKPRAVAPRRPAAAPAPASSPTTTA.

The interval 37–97 (EKPSVRKARE…APASSPTTTA (61 aa)) is disordered. Positions 76–97 (RAVAPRRPAAAPAPASSPTTTA) are enriched in low complexity.

This sequence belongs to the bacterial ribosomal protein bS21 family.

This chain is Small ribosomal subunit protein bS21, found in Methylobacterium sp. (strain 4-46).